We begin with the raw amino-acid sequence, 343 residues long: Anthranilate phosphoribosyltransferase (343 aa).

5-phospho-alpha-D-ribose 1-diphosphate-binding positions include Gly-84, 87 to 88 (GD), Thr-92, 94 to 97 (NIST), 112 to 120 (KHGNRSASS), and Ser-124. Gly-84 is a binding site for anthranilate. A Mg(2+)-binding site is contributed by Ser-96. Residue Asn-115 participates in anthranilate binding. Arg-170 is an anthranilate binding site. The Mg(2+) site is built by Asp-229 and Glu-230.

The protein belongs to the anthranilate phosphoribosyltransferase family. Homodimer. Requires Mg(2+) as cofactor.

The catalysed reaction is N-(5-phospho-beta-D-ribosyl)anthranilate + diphosphate = 5-phospho-alpha-D-ribose 1-diphosphate + anthranilate. It functions in the pathway amino-acid biosynthesis; L-tryptophan biosynthesis; L-tryptophan from chorismate: step 2/5. Its function is as follows. Catalyzes the transfer of the phosphoribosyl group of 5-phosphorylribose-1-pyrophosphate (PRPP) to anthranilate to yield N-(5'-phosphoribosyl)-anthranilate (PRA). The chain is Anthranilate phosphoribosyltransferase from Bordetella bronchiseptica (strain ATCC BAA-588 / NCTC 13252 / RB50) (Alcaligenes bronchisepticus).